Reading from the N-terminus, the 100-residue chain is Integration host factor subunit alpha (100 aa).

The protein belongs to the bacterial histone-like protein family. Heterodimer of an alpha and a beta chain.

In terms of biological role, this protein is one of the two subunits of integration host factor, a specific DNA-binding protein that functions in genetic recombination as well as in transcriptional and translational control. This is Integration host factor subunit alpha from Ruegeria pomeroyi (strain ATCC 700808 / DSM 15171 / DSS-3) (Silicibacter pomeroyi).